Here is a 72-residue protein sequence, read N- to C-terminus: Large ribosomal subunit protein bL31 (72 aa).

Positions 16, 18, 38, and 41 each coordinate Zn(2+).

This sequence belongs to the bacterial ribosomal protein bL31 family. Type A subfamily. Part of the 50S ribosomal subunit. Requires Zn(2+) as cofactor.

Functionally, binds the 23S rRNA. In Vibrio cholerae serotype O1 (strain ATCC 39541 / Classical Ogawa 395 / O395), this protein is Large ribosomal subunit protein bL31.